The sequence spans 496 residues: Polyamine oxidase 6 (496 aa).

An N-terminal signal peptide occupies residues 1 to 27 (MTKPTTMAIFLVLALSIAQLLPSLVAG). 2 residues coordinate FAD: glutamate 61 and arginine 69. Asparagine 103 and asparagine 150 each carry an N-linked (GlcNAc...) asparagine glycan. Valine 261 contacts FAD. A glycan (N-linked (GlcNAc...) asparagine) is linked at asparagine 278. Glutamate 454 is a binding site for FAD.

The protein belongs to the flavin monoamine oxidase family. It depends on FAD as a cofactor.

It localises to the secreted. The protein localises to the extracellular space. Its subcellular location is the apoplast. The protein operates within amine and polyamine degradation; spermine degradation. In terms of biological role, flavoenzyme involved in polyamine back-conversion. Catalyzes the oxidation of the secondary amino group of polyamines, such as spermine and spermidine. This Oryza sativa subsp. japonica (Rice) protein is Polyamine oxidase 6.